Reading from the N-terminus, the 288-residue chain is Polyamine aminopropyltransferase (288 aa).

A PABS domain is found at 11 to 245; sequence IEWYPRGYGV…SPWSFLVGVK (235 aa). Gln-36 contacts S-methyl-5'-thioadenosine. Positions 67 and 91 each coordinate spermidine. Residues Glu-111 and 148–149 each bind S-methyl-5'-thioadenosine; that span reads DG. Asp-166 (proton acceptor) is an active-site residue. Residue 166 to 169 coordinates spermidine; sequence DSTD. Pro-173 lines the S-methyl-5'-thioadenosine pocket.

It belongs to the spermidine/spermine synthase family. Homodimer or homotetramer.

It is found in the cytoplasm. The catalysed reaction is S-adenosyl 3-(methylsulfanyl)propylamine + agmatine = N(1)-(3-aminopropyl)agmatine + S-methyl-5'-thioadenosine + H(+). It catalyses the reaction S-adenosyl 3-(methylsulfanyl)propylamine + putrescine = S-methyl-5'-thioadenosine + spermidine + H(+). It carries out the reaction cadaverine + S-adenosyl 3-(methylsulfanyl)propylamine = aminopropylcadaverine + S-methyl-5'-thioadenosine + H(+). The protein operates within amine and polyamine biosynthesis; spermidine biosynthesis; spermidine from putrescine: step 1/1. Its function is as follows. Involved in the biosynthesis of polyamines which are thought to support the growth of thermophilic microorganisms under high-temperature conditions. It seems that long-chain and branched-chain of polyamines effectively stabilize DNA and RNA, respectively. Catalyzes the irreversible transfer of a propylamine group from the amino donor S-adenosylmethioninamine (decarboxy-AdoMet) to agmatine to yield N1-aminopropylagmatine. It can also use cadaverine (1,5-diaminopentane) and putrescine (1,4-diaminobutane) as substrate with a lower activity than that of agmatine. The reaction involves a nucleophilic attack on the C-3 methylene of the propylamine moiety adjacent to the positively charged sulfur of decarboxy-AdoMet. The sequence is that of Polyamine aminopropyltransferase from Thermococcus kodakarensis (strain ATCC BAA-918 / JCM 12380 / KOD1) (Pyrococcus kodakaraensis (strain KOD1)).